A 57-amino-acid chain; its full sequence is Gene 19.3 protein (57 aa).

The protein is Gene 19.3 protein (19.3) of Escherichia coli (Bacteriophage T3).